The following is a 410-amino-acid chain: Cytochrome P450 (410 aa).

A heme-binding site is contributed by C359.

Belongs to the cytochrome P450 family. Heme serves as cofactor.

The polypeptide is Cytochrome P450 (cypA) (Bacillus subtilis (strain 168)).